Reading from the N-terminus, the 229-residue chain is MAKKSKQLRAALEKIDSTKAYSVEEAVALAKETNFAKFDATVEVAYNLNIDVKKADQQIRGAMVLPNGTGKTSRVLVFARGAKAEEAKVAGADFVGEDDLVAKINDGWLDFDVVIATPDMMALVGRLGRVLGPRNLMPNPKTGTVTMDVAKAVEESKGGKITYRADRAGNVQAIIGKVSFEAEKLVENFKAFNETIQKAKPATAKGTYVTNLTITTTQGVGIKVDVNSL.

Belongs to the universal ribosomal protein uL1 family. As to quaternary structure, part of the 50S ribosomal subunit.

Its function is as follows. Binds directly to 23S rRNA. The L1 stalk is quite mobile in the ribosome, and is involved in E site tRNA release. Functionally, protein L1 is also a translational repressor protein, it controls the translation of the L11 operon by binding to its mRNA. The protein is Large ribosomal subunit protein uL1 of Streptococcus pneumoniae (strain JJA).